We begin with the raw amino-acid sequence, 210 residues long: Glutathione S-transferase P 1 (210 aa).

Residues 1–80 (PEYTIIYFNA…LLARNHDLYG (80 aa)) enclose the GST N-terminal domain. Residues Tyr-7, Arg-13, Trp-38, Lys-44, 51 to 52 (QL), and 64 to 65 (QS) each bind glutathione. Positions 82-203 (NPREASLIDM…SSDAHKKRPI (122 aa)) constitute a GST C-terminal domain.

It belongs to the GST superfamily. Pi family. Homodimer.

Its subcellular location is the cytoplasm. The protein resides in the mitochondrion. The protein localises to the nucleus. The catalysed reaction is RX + glutathione = an S-substituted glutathione + a halide anion + H(+). In terms of biological role, conjugation of reduced glutathione to a wide number of exogenous and endogenous hydrophobic electrophiles. This chain is Glutathione S-transferase P 1, found in Bufo bufo (European toad).